Consider the following 478-residue polypeptide: Geranial dehydrogenase (478 aa).

Residue 230 to 235 coordinates NAD(+); it reads GSTSAG. Glu252 functions as the Proton acceptor in the catalytic mechanism. The active-site Nucleophile is Cys286.

It belongs to the aldehyde dehydrogenase family.

It carries out the reaction (2E)-geranial + NAD(+) + H2O = geranate + NADH + 2 H(+). The catalysed reaction is perillyl aldehyde + NAD(+) + H2O = perillate + NADH + 2 H(+). It functions in the pathway terpene metabolism; monoterpene degradation. Functionally, involved in the degradation of the monoterpenes beta-myrcene and limonene. During anaerobic degradation of beta-myrcene, catalyzes the NAD(+)-dependent oxidation of geranial to geranic acid. Seems to be specific for the trans-isomer geranial, since it does not act on the cis-isomer neral. During degradation of limonene, catalyzes the NAD(+)-dependent conversion of perillyl aldehyde to perrilic acid. This is Geranial dehydrogenase from Castellaniella defragrans (strain DSM 12143 / CCUG 39792 / 65Phen) (Alcaligenes defragrans).